Consider the following 1354-residue polypeptide: RNA-directed RNA polymerase VP1 (1354 aa).

It catalyses the reaction RNA(n) + a ribonucleoside 5'-triphosphate = RNA(n+1) + diphosphate. In terms of biological role, RNA-directed RNA polymerase that is involved in transcription and genome replication. Following infection, it catalyzes the synthesis of fully conservative plus strands. After core assembly, which consists in recruitment of one capped plus-strand for each genomic segments and polymerase complexes, the polymerase switches mode and catalyzes the synthesis of complementary minus-strands. This is RNA-directed RNA polymerase VP1 from Cryphonectria parasitica mycoreovirus 1 (strain 9B21) (CpMYRV-1).